A 1410-amino-acid chain; its full sequence is Pogo transposable element with ZNF domain (1410 aa).

The tract at residues 238–291 (RSTVPQSQSQQTKSTPSTSTTPTATQPTSLGQLAVQSPGQSNQTTNPKLAPSFP) is disordered. The span at 239–266 (STVPQSQSQQTKSTPSTSTTPTATQPTS) shows a compositional bias: low complexity. Positions 267 to 284 (LGQLAVQSPGQSNQTTNP) are enriched in polar residues. Residue Lys-319 forms a Glycyl lysine isopeptide (Lys-Gly) (interchain with G-Cter in SUMO2) linkage. The tract at residues 332–361 (QSPGPVVVSNNSSAHGSQRTSGPESSMKVT) is disordered. Ser-333 bears the Phosphoserine mark. Over residues 345–361 (AHGSQRTSGPESSMKVT) the composition is skewed to polar residues. Lys-359 is covalently cross-linked (Glycyl lysine isopeptide (Lys-Gly) (interchain with G-Cter in SUMO2)). At Ser-363 the chain carries Phosphoserine. The C2H2-type 1; atypical zinc finger occupies 375-397 (KICPRCNAQFRVTEALRGHMCYC). The tract at residues 409–456 (KSLDSEPSVPSAAKPPSPEKTAPVASTPSSTPIPALSPPTKVPEPNEN) is disordered. A Glycyl lysine isopeptide (Lys-Gly) (interchain with G-Cter in SUMO2) cross-link involves residue Lys-422. Phosphoserine is present on Ser-425. Thr-439 carries the phosphothreonine modification. The residue at position 445 (Ser-445) is a Phosphoserine. Residue Lys-449 forms a Glycyl lysine isopeptide (Lys-Gly) (interchain with G-Cter in SUMO2) linkage. Thr-463 carries the post-translational modification Phosphothreonine. Lys-489 participates in a covalent cross-link: Glycyl lysine isopeptide (Lys-Gly) (interchain with G-Cter in SUMO2). 6 consecutive C2H2-type zinc fingers follow at residues 494 to 516 (FRCP…MKHH), 530 to 553 (TICQ…ENVH), 560 to 583 (TKCK…KDTH), 590 to 613 (YVCQ…RMIH), 619 to 641 (LLCP…YMRH), and 647 to 670 (YHCN…LQHH). A Glycyl lysine isopeptide (Lys-Gly) (interchain with G-Cter in SUMO2) cross-link involves residue Lys-629. Lys-677 is covalently cross-linked (Glycyl lysine isopeptide (Lys-Gly) (interchain with G-Cter in SUMO2)). The interval 693–715 (SRGQPRTVPVSSNDTPPSALQEA) is disordered. Over residues 701–710 (PVSSNDTPPS) the composition is skewed to polar residues. A C2H2-type 8 zinc finger spans residues 771-794 (VHCSLCRYSTCCSRAYANHMINNH). Residue Lys-801 forms a Glycyl lysine isopeptide (Lys-Gly) (interchain with G-Cter in SUMO2) linkage. Positions 810-850 (VSGIKLACTSCTFVTSVGDAMAKHLVFNPSHRSSSILPRGL) are required for interaction with CBX5. A C2H2-type 9 zinc finger spans residues 815 to 840 (LACTSCTFVTSVGDAMAKHLVFNPSH). At Ser-856 the chain carries Phosphoserine. Disordered regions lie at residues 857-927 (RHGQ…PQAL) and 942-969 (VDDQ…GVGK). Basic and acidic residues predominate over residues 860–870 (QTRDRVHDRNV). Residue Lys-883 forms a Glycyl lysine isopeptide (Lys-Gly) (interchain with G-Cter in SUMO2) linkage. Residues 892-915 (ATPAEPEELLTPLAPALPSPASTA) are compositionally biased toward low complexity. The HTH CENPB-type domain occupies 1015-1085 (GENLEGKYLS…MLRHHLTPHA (71 aa)). Residues 1117-1323 (LPLSMIVAID…DCPELVQRSF (207 aa)) form the DDE-1 domain. Ser-1338 is modified (phosphoserine). Residues 1340-1360 (TRNADMQEELIASLEEQLKLS) adopt a coiled-coil conformation. The interval 1360–1400 (SGEHSESSTPRPRSSPEETIEPESLHQLFEGESETESFYGF) is disordered. A phosphoserine mark is found at Ser-1364 and Ser-1367. At Thr-1368 the chain carries Phosphothreonine. A phosphoserine mark is found at Ser-1373 and Ser-1374. Position 1378 is a phosphothreonine (Thr-1378). The short motif at 1380 to 1404 (EPESLHQLFEGESETESFYGFEEAD) is the Integrase domain-binding motif (IBM) element. Position 1392 is a phosphoserine; by CK2 (Ser-1392). A Phosphothreonine modification is found at Thr-1394. Ser-1396 carries the phosphoserine; by CK2 modification.

Interacts with CBX1, CBX3, MAD2L2 and CHAMP1. Interacts with CBX5; POGZ competes with PXVXL motif-containing proteins such as INCENP and TRIM28 for interaction with CBX5. Interacts (via IBM motif) with PSIP1 isoform 1 (via IBD domain); phosphorylation increases its affinity for PSIP1. Interacts with HDGFL2. In terms of processing, phosphorylation increases its interaction with PSIP1.

It is found in the nucleus. It localises to the chromosome. Its subcellular location is the cytoplasm. In terms of biological role, plays a role in mitotic cell cycle progression and is involved in kinetochore assembly and mitotic sister chromatid cohesion. Probably through its association with CBX5 plays a role in mitotic chromosome segregation by regulating aurora kinase B/AURKB activation and AURKB and CBX5 dissociation from chromosome arms. Promotes the repair of DNA double-strand breaks through the homologous recombination pathway. The polypeptide is Pogo transposable element with ZNF domain (POGZ) (Homo sapiens (Human)).